Here is a 405-residue protein sequence, read N- to C-terminus: 11-beta-hydroxysteroid dehydrogenase type 2 (405 aa).

82-111 contributes to the NAD(+) binding site; sequence TRAVLITGCDSGFGKETAKKLDSMGFTVLA. Ser-219 contacts substrate. Catalysis depends on Tyr-232, which acts as the Proton acceptor. The essential for protein stability stretch occupies residues 335-339; that stretch reads RRRYY. A compositionally biased stretch (low complexity) spans 377–387; it reads QPGQPGTTPPQ. Residues 377 to 405 are disordered; the sequence is QPGQPGTTPPQDAAQDPNLSPGPSPAVAR. A compositionally biased stretch (pro residues) spans 396 to 405; sequence SPGPSPAVAR.

It belongs to the short-chain dehydrogenases/reductases (SDR) family. In terms of assembly, interacts with ligand-free cytoplasmic NR3C2. Expressed in kidney, placenta, pancreas, prostate, ovary, small intestine and colon, and in lower levels in the spleen and testis. At midgestation, expressed at high levels in placenta and in fetal kidney and, at much lower levels, in fetal lung and testis.

It is found in the microsome. The protein resides in the endoplasmic reticulum. The enzyme catalyses an 11beta-hydroxysteroid + NAD(+) = an 11-oxosteroid + NADH + H(+). It carries out the reaction cortisol + NAD(+) = cortisone + NADH + H(+). It catalyses the reaction corticosterone + NAD(+) = 11-dehydrocorticosterone + NADH + H(+). The catalysed reaction is 11beta,17beta-dihydroxyandrost-4-ene-3-one + NAD(+) = 17beta-hydroxyandrost-4-ene-3,11-dione + NADH + H(+). The enzyme catalyses 11beta-hydroxyandrost-4-ene-3,17-dione + NAD(+) = androst-4-ene-3,11,17-trione + NADH + H(+). It functions in the pathway steroid metabolism. With respect to regulation, inhibited by glycyrrhetinic acid (derived from liquorice). Functionally, catalyzes the conversion of biologically active 11beta-hydroxyglucocorticoids (11beta-hydroxysteroid) such as cortisol, to inactive 11-ketoglucocorticoids (11-oxosteroid) such as cortisone, in the presence of NAD(+). Functions as a dehydrogenase (oxidase), thereby decreasing the concentration of active glucocorticoids, thus protecting the nonselective mineralocorticoid receptor from occupation by glucocorticoids. Plays an important role in maintaining glucocorticoids balance during preimplantation and protects the fetus from excessive maternal corticosterone exposure. Catalyzes the oxidation of 11beta-hydroxytestosterone (11beta,17beta-dihydroxyandrost-4-ene-3-one) to 11-ketotestosterone (17beta-hydroxyandrost-4-ene-3,11-dione), a major bioactive androgen. Catalyzes the conversion of 11beta-hydroxyandrostenedione (11beta-hydroxyandrost-4-ene-3,17-dione) to 11-ketoandrostenedione (androst-4-ene-3,11,17-trione), which can be further metabolized to 11-ketotestosterone. Converts 7-beta-25-dihydroxycholesterol to 7-oxo-25-hydroxycholesterol in vitro. 7-beta-25-dihydroxycholesterol (not 7-oxo-25-hydroxycholesterol) acts as a ligand for the G-protein-coupled receptor (GPCR) Epstein-Barr virus-induced gene 2 (EBI2) and may thereby regulate immune cell migration. May protect ovulating oocytes and fertilizing spermatozoa from the adverse effects of cortisol. In Homo sapiens (Human), this protein is 11-beta-hydroxysteroid dehydrogenase type 2.